The following is a 571-amino-acid chain: E3 ubiquitin-protein ligase ipaH3 (571 aa).

The interval methionine 1 to histidine 260 is interaction with target proteins. LRR repeat units follow at residues isoleucine 58–glutamine 81, threonine 83–proline 99, alanine 100–proline 119, alanine 120–tyrosine 144, asparagine 146–proline 159, threonine 160–alanine 184, aspartate 186–asparagine 202, serine 205–leucine 229, and threonine 232–histidine 260. The tract at residues serine 269–arginine 278 is linker. An NEL domain is found at proline 279 to serine 571. Positions proline 279–serine 571 are E3 ubiquitin-protein ligase catalytic domain. Cysteine 363 serves as the catalytic Glycyl thioester intermediate.

This sequence belongs to the LRR-containing bacterial E3 ligase family. In terms of processing, ubiquitinated in the presence of host E1 ubiquitin-activating enzyme, E2 ubiquitin-conjugating enzyme UBE2D3 and ubiquitin.

The protein localises to the secreted. It localises to the host cytoplasm. The enzyme catalyses S-ubiquitinyl-[E2 ubiquitin-conjugating enzyme]-L-cysteine + [acceptor protein]-L-lysine = [E2 ubiquitin-conjugating enzyme]-L-cysteine + N(6)-ubiquitinyl-[acceptor protein]-L-lysine.. Its function is as follows. Effector proteins function to alter host cell physiology and promote bacterial survival in host tissues. This protein is an E3 ubiquitin ligase that interferes with host's ubiquitination pathway. Synthesizes a 'Lys-48'-linked ubiquitin chain, which requires non-covalent binding between ubiquitin and the host ubiquitin-conjugating enzyme UBE2D1. The sequence is that of E3 ubiquitin-protein ligase ipaH3 (ipaH3) from Shigella flexneri.